The chain runs to 155 residues: uncharacterized protein (155 aa).

The span at Met1–Pro14 shows a compositional bias: polar residues. Positions Met1–Asp44 are disordered. Residues Arg17–Ala30 show a composition bias toward low complexity.

This is an uncharacterized protein from Pseudomonas aeruginosa (strain ATCC 15692 / DSM 22644 / CIP 104116 / JCM 14847 / LMG 12228 / 1C / PRS 101 / PAO1).